A 348-amino-acid chain; its full sequence is VIP36-like protein (348 aa).

A signal peptide spans 1-38 (MAATLGPLGSWQQWRRCLLARDGSRMLLLLLLLGSGQG). Topologically, residues 39-313 (PQQVGAGQTF…APLPPLSGLA (275 aa)) are lumenal. One can recognise an L-type lectin-like domain in the interval 49-274 (EYLKREHSLS…DVISLKLFEL (226 aa)). Residues serine 93 and aspartate 128 each contribute to the a carbohydrate site. Residues aspartate 159, tyrosine 161, and asparagine 163 each contribute to the Ca(2+) site. 161–163 (YPN) contributes to the a carbohydrate binding site. N-linked (GlcNAc...) asparagine glycosylation is present at asparagine 181. Position 188 (histidine 188) interacts with a carbohydrate. Aspartate 191 serves as a coordination point for Ca(2+). A disulfide bridge links cysteine 200 with cysteine 237. 258–260 (GDL) serves as a coordination point for a carbohydrate. The chain crosses the membrane as a helical span at residues 314 to 334 (LFHIVFFSLVIFVFAIVIGII). The Cytoplasmic segment spans residues 335–348 (LYNKWQEQSRKRFY). The Endoplasmic reticulum retention signal signature appears at 344–346 (RKR).

The protein localises to the endoplasmic reticulum membrane. The protein resides in the golgi apparatus membrane. In terms of biological role, may be involved in the regulation of export from the endoplasmic reticulum of a subset of glycoproteins. May function as a regulator of ERGIC-53. The sequence is that of VIP36-like protein (LMAN2L) from Pongo abelii (Sumatran orangutan).